A 359-amino-acid chain; its full sequence is Cytochrome c oxidase subunit 2 (359 aa).

A signal peptide spans 1-28 (MEQQNKRGLKRKALLGGVLGLGGLAMAG). The S-diacylglycerol cysteine moiety is linked to residue C29. A run of 2 helical transmembrane segments spans residues 64–84 (VWVA…TAIF) and 107–127 (VPLE…LFFF). The disordered stretch occupies residues 168–203 (PGGQDYQGSDPERQAAAEASKKDPSGDNPIHGNSKS). Residues 177 to 192 (DPERQAAAEASKKDPS) show a composition bias toward basic and acidic residues. The Cu cation site is built by H244, C285, E287, C289, H293, and M296. The disordered stretch occupies residues 335 to 359 (YATSTSPFVSDRTATRDGENTQSNA).

Associates with subunits I, III and IV to form cytochrome c oxidase. The 4 subunit cytochrome c oxidase forms a supercomplex with the menaquinol-cytochrome c reductase complex (cytochrome bc1). Requires binuclear copper center (CuA) as cofactor.

The protein localises to the cell membrane. The enzyme catalyses 4 Fe(II)-[cytochrome c] + O2 + 8 H(+)(in) = 4 Fe(III)-[cytochrome c] + 2 H2O + 4 H(+)(out). In terms of biological role, subunits I and II form the functional core of the enzyme complex. Electrons originating in cytochrome c are transferred via heme a and Cu(A) to the binuclear center formed by heme a3 and Cu(B). The chain is Cytochrome c oxidase subunit 2 (ctaC) from Corynebacterium glutamicum (strain ATCC 13032 / DSM 20300 / JCM 1318 / BCRC 11384 / CCUG 27702 / LMG 3730 / NBRC 12168 / NCIMB 10025 / NRRL B-2784 / 534).